Reading from the N-terminus, the 920-residue chain is DNA ligase (920 aa).

Residues 90–94 (DAAYD), 139–140 (SL), and E173 each bind NAD(+). The active-site N6-AMP-lysine intermediate is the K175. NAD(+) contacts are provided by R196, E235, K360, and K384. Zn(2+) contacts are provided by C481, C484, C500, and C506. Residues 662 to 691 (GEAAIESAETQGDTASETTGAPTGAEAPLG) form a disordered region. Residues 669–682 (AETQGDTASETTGA) show a composition bias toward polar residues. The region spanning 839-920 (SLPQTLAGKT…FAQLLATGTI (82 aa)) is the BRCT domain.

It belongs to the NAD-dependent DNA ligase family. LigA subfamily. Mg(2+) is required as a cofactor. It depends on Mn(2+) as a cofactor.

It carries out the reaction NAD(+) + (deoxyribonucleotide)n-3'-hydroxyl + 5'-phospho-(deoxyribonucleotide)m = (deoxyribonucleotide)n+m + AMP + beta-nicotinamide D-nucleotide.. In terms of biological role, DNA ligase that catalyzes the formation of phosphodiester linkages between 5'-phosphoryl and 3'-hydroxyl groups in double-stranded DNA using NAD as a coenzyme and as the energy source for the reaction. It is essential for DNA replication and repair of damaged DNA. The protein is DNA ligase of Bifidobacterium longum (strain DJO10A).